The primary structure comprises 375 residues: Growth/differentiation factor 8 (375 aa).

Positions Met-1–Ala-18 are cleaved as a signal peptide. Residues Gly-19–Arg-266 constitute a propeptide that is removed on maturation. A glycan (N-linked (GlcNAc...) asparagine) is linked at Asn-71. 3 cysteine pairs are disulfide-bonded: Cys-281–Cys-340, Cys-309–Cys-372, and Cys-313–Cys-374.

The protein belongs to the TGF-beta family. As to quaternary structure, homodimer; disulfide-linked. Interacts with WFIKKN2, leading to inhibit its activity. Interacts with FSTL3. Post-translationally, synthesized as large precursor molecule that undergoes proteolytic cleavage to generate an N-terminal propeptide and a disulfide linked C-terminal dimer, which is the biologically active molecule. The circulating form consists of a latent complex of the C-terminal dimer and other proteins, including its propeptide, which maintain the C-terminal dimer in a latent, inactive state. Ligand activation requires additional cleavage of the prodomain by a tolloid-like metalloproteinase.

It localises to the secreted. Its function is as follows. Acts specifically as a negative regulator of skeletal muscle growth. The polypeptide is Growth/differentiation factor 8 (MSTN) (Vulpes vulpes (Red fox)).